Here is an 85-residue protein sequence, read N- to C-terminus: U4-theraphotoxin-Hhn1ad (85 aa).

The signal sequence occupies residues 1-22 (MKVTLIAILTCAAVLVLHTTAA). A propeptide spanning residues 23-48 (EELKTESQLMEVGMPDTELATVDEER) is cleaved from the precursor. Intrachain disulfides connect Cys-52/Cys-66, Cys-56/Cys-77, and Cys-71/Cys-82.

The protein belongs to the neurotoxin 12 (Hwtx-2) family. 02 (Hwtx-2) subfamily. As to expression, expressed by the venom gland.

Its subcellular location is the secreted. Its function is as follows. Postsynaptic neurotoxin. This is U4-theraphotoxin-Hhn1ad from Cyriopagopus hainanus (Chinese bird spider).